Consider the following 1005-residue polypeptide: Mediator of RNA polymerase II transcription subunit 24 (1005 aa).

The protein belongs to the Mediator complex subunit 24 family. As to quaternary structure, component of the Mediator complex.

It is found in the nucleus. Component of the Mediator complex, a coactivator involved in the regulated transcription of nearly all RNA polymerase II-dependent genes. Mediator functions as a bridge to convey information from gene-specific regulatory proteins to the basal RNA polymerase II transcription machinery. Mediator is recruited to promoters by direct interactions with regulatory proteins and serves as a scaffold for the assembly of a functional preinitiation complex with RNA polymerase II and the general transcription factors. The protein is Mediator of RNA polymerase II transcription subunit 24 (MED24) of Aedes aegypti (Yellowfever mosquito).